The following is a 619-amino-acid chain: MALLQIAEPGQSSAPHQHRIAIGIDLGTTHSLVATVLSGKPKVLNDVQNRRLLPSIVHYGDNTTHYGEEAKPFIIADPKNTIVSVKRFMGRSKADIKFQHPYELVGSENEMPAFETRAGRKTPVEISAEILKQLKDRAEDSLQNPVNGAVITVPAYFDEAQRQATRDAAQLAGLNVLRLLNEPTAAAVAYGLDQESNLATDRNYVIYDLGGGTFDVSILRFSQGVFEVLATGGHTALGGDDLDRLIVKWAKKQLNIDVLSDEDYAVFIVAARQAKEQLSTQDSVELKLLEATLTLDRPTFESIIQVALDKTISVCKRVLRDAKLELTDIQNVVLVGGSTRSYAVQKAVREVFAQEPLCTINPDEVVAIGASITANQLIGNSQDGSLLLDVTPLSLGLETMGGLVERLISRNTAIPVARRQEFTTYQDGQTAMLIHVVQGERDLVEHCRSLGRFVLHGIPPMTAGQARIEVTFQVDADGLLTVSAREATSGVQAHIDIKPSYGLSEADTERLLIEGFQHAEEDKNLRHLKETKVEAERELEALEQALKVDADLLDEKQLDALNSAKESLKAQLEGSDIQAIEHAVQQLKVHSDAFAALRMNRHIDHALKGTKLDDWSKSN.

Belongs to the heat shock protein 70 family.

Functionally, chaperone involved in the maturation of iron-sulfur cluster-containing proteins. Has a low intrinsic ATPase activity which is markedly stimulated by HscB. The polypeptide is Chaperone protein HscA homolog (Acinetobacter baumannii (strain ACICU)).